A 180-amino-acid polypeptide reads, in one-letter code: Adenine phosphoribosyltransferase (180 aa).

Alanine 2 bears the N-acetylalanine mark. A phosphoserine mark is found at serine 4, serine 15, and serine 30. Phosphotyrosine is present on tyrosine 60. Serine 66 carries the phosphoserine modification. N6-acetyllysine is present on lysine 114. The residue at position 135 (threonine 135) is a Phosphothreonine.

The protein belongs to the purine/pyrimidine phosphoribosyltransferase family. Homodimer.

It is found in the cytoplasm. The catalysed reaction is AMP + diphosphate = 5-phospho-alpha-D-ribose 1-diphosphate + adenine. It participates in purine metabolism; AMP biosynthesis via salvage pathway; AMP from adenine: step 1/1. Its function is as follows. Catalyzes a salvage reaction resulting in the formation of AMP, that is energically less costly than de novo synthesis. In Cricetulus griseus (Chinese hamster), this protein is Adenine phosphoribosyltransferase.